The primary structure comprises 66 residues: MPQLDTSTWLTMILSMFLTLFIIFQLKVSKHNFYHNPELTPTKMLKQNTPWETKWTKIYLPLLLPL.

Met-1 bears the N-formylmethionine mark. Residues 8-24 (TWLTMILSMFLTLFIIF) traverse the membrane as a helical segment. Lys-54 is subject to N6-acetyllysine; alternate. Lys-54 bears the N6-succinyllysine; alternate mark. Lys-57 carries the N6-acetyllysine modification.

This sequence belongs to the ATPase protein 8 family. Component of the ATP synthase complex composed at least of ATP5F1A/subunit alpha, ATP5F1B/subunit beta, ATP5MC1/subunit c (homooctomer), MT-ATP6/subunit a, MT-ATP8/subunit 8, ATP5ME/subunit e, ATP5MF/subunit f, ATP5MG/subunit g, ATP5MK/subunit k, ATP5MJ/subunit j, ATP5F1C/subunit gamma, ATP5F1D/subunit delta, ATP5F1E/subunit epsilon, ATP5PF/subunit F6, ATP5PB/subunit b, ATP5PD/subunit d, ATP5PO/subunit OSCP. ATP synthase complex consists of a soluble F(1) head domain (subunits alpha(3) and beta(3)) - the catalytic core - and a membrane F(0) domain - the membrane proton channel (subunits c, a, 8, e, f, g, k and j). These two domains are linked by a central stalk (subunits gamma, delta, and epsilon) rotating inside the F1 region and a stationary peripheral stalk (subunits F6, b, d, and OSCP). Interacts with PRICKLE3.

The protein resides in the mitochondrion membrane. Functionally, subunit 8, of the mitochondrial membrane ATP synthase complex (F(1)F(0) ATP synthase or Complex V) that produces ATP from ADP in the presence of a proton gradient across the membrane which is generated by electron transport complexes of the respiratory chain. ATP synthase complex consist of a soluble F(1) head domain - the catalytic core - and a membrane F(1) domain - the membrane proton channel. These two domains are linked by a central stalk rotating inside the F(1) region and a stationary peripheral stalk. During catalysis, ATP synthesis in the catalytic domain of F(1) is coupled via a rotary mechanism of the central stalk subunits to proton translocation. In vivo, can only synthesize ATP although its ATP hydrolase activity can be activated artificially in vitro. Part of the complex F(0) domain. The polypeptide is ATP synthase F(0) complex subunit 8 (Bos taurus (Bovine)).